Here is a 132-residue protein sequence, read N- to C-terminus: Large ribosomal subunit protein uL14 (132 aa).

Belongs to the universal ribosomal protein uL14 family. Part of the 50S ribosomal subunit. Forms a cluster with proteins L3 and L24e, part of which may contact the 16S rRNA in 2 intersubunit bridges.

Functionally, binds to 23S rRNA. Forms part of two intersubunit bridges in the 70S ribosome. The protein is Large ribosomal subunit protein uL14 of Methanococcus maripaludis (strain DSM 14266 / JCM 13030 / NBRC 101832 / S2 / LL).